The chain runs to 164 residues: Deoxyuridine 5'-triphosphate nucleotidohydrolase (164 aa).

Residues 66 to 68, N79, 83 to 85, and K93 each bind substrate; these read RSG and TVD.

This sequence belongs to the dUTPase family. Mg(2+) is required as a cofactor.

It carries out the reaction dUTP + H2O = dUMP + diphosphate + H(+). It participates in pyrimidine metabolism; dUMP biosynthesis; dUMP from dCTP (dUTP route): step 2/2. Functionally, this enzyme is involved in nucleotide metabolism: it produces dUMP, the immediate precursor of thymidine nucleotides and it decreases the intracellular concentration of dUTP so that uracil cannot be incorporated into DNA. The polypeptide is Deoxyuridine 5'-triphosphate nucleotidohydrolase (Rhodococcus erythropolis (strain PR4 / NBRC 100887)).